Here is a 313-residue protein sequence, read N- to C-terminus: 4-diphosphocytidyl-2-C-methyl-D-erythritol kinase (313 aa).

The active site involves Lys27. 110-120 contacts ATP; sequence PIGGGVGGGSS. The active site involves Asp152.

Belongs to the GHMP kinase family. IspE subfamily.

The enzyme catalyses 4-CDP-2-C-methyl-D-erythritol + ATP = 4-CDP-2-C-methyl-D-erythritol 2-phosphate + ADP + H(+). Its pathway is isoprenoid biosynthesis; isopentenyl diphosphate biosynthesis via DXP pathway; isopentenyl diphosphate from 1-deoxy-D-xylulose 5-phosphate: step 3/6. In terms of biological role, catalyzes the phosphorylation of the position 2 hydroxy group of 4-diphosphocytidyl-2C-methyl-D-erythritol. The protein is 4-diphosphocytidyl-2-C-methyl-D-erythritol kinase of Histophilus somni (strain 129Pt) (Haemophilus somnus).